The following is a 313-amino-acid chain: Iron-sulfur protein required for NADH dehydrogenase, mitochondrial (313 aa).

The N-terminal 22 residues, 1-22 (MATVALLRSLRRRELHAAHISA), are a transit peptide targeting the mitochondrion. 51–58 (GKGGVGKS) serves as a coordination point for ATP.

It belongs to the Mrp/NBP35 ATP-binding proteins family. It depends on [4Fe-4S] cluster as a cofactor.

The protein localises to the mitochondrion matrix. Essential during early vegetative growth. Required for the assembly of the mitochondrial membrane respiratory chain NADH dehydrogenase (Complex I). Involved in mitochondrial translation activity. May deliver of one or more Fe-S clusters to complex I subunits. This Arabidopsis thaliana (Mouse-ear cress) protein is Iron-sulfur protein required for NADH dehydrogenase, mitochondrial.